Reading from the N-terminus, the 43-residue chain is Protein PsbN (43 aa).

Residues 7–27 (IAIFISGLLVSFTGYALYTAF) form a helical membrane-spanning segment.

Belongs to the PsbN family.

It is found in the plastid. It localises to the chloroplast thylakoid membrane. May play a role in photosystem I and II biogenesis. This chain is Protein PsbN, found in Suaeda maritima (Annual sea blite).